A 161-amino-acid polypeptide reads, in one-letter code: Cyclic pyranopterin monophosphate synthase (161 aa).

Residues methionine 75 to histidine 77 and methionine 114 to glutamate 115 each bind substrate. The active site involves aspartate 129.

The protein belongs to the MoaC family. In terms of assembly, homohexamer; trimer of dimers.

The enzyme catalyses (8S)-3',8-cyclo-7,8-dihydroguanosine 5'-triphosphate = cyclic pyranopterin phosphate + diphosphate. Its pathway is cofactor biosynthesis; molybdopterin biosynthesis. In terms of biological role, catalyzes the conversion of (8S)-3',8-cyclo-7,8-dihydroguanosine 5'-triphosphate to cyclic pyranopterin monophosphate (cPMP). The chain is Cyclic pyranopterin monophosphate synthase from Staphylococcus carnosus (strain TM300).